We begin with the raw amino-acid sequence, 113 residues long: Hydrogenase maturation factor HypA (113 aa).

His2 is a binding site for Ni(2+). Zn(2+)-binding residues include Cys70, Cys73, Cys86, and Cys88.

Belongs to the HypA/HybF family.

In terms of biological role, involved in the maturation of [NiFe] hydrogenases. Required for nickel insertion into the metal center of the hydrogenase. The chain is Hydrogenase maturation factor HypA from Trichormus variabilis (strain ATCC 29413 / PCC 7937) (Anabaena variabilis).